Here is a 215-residue protein sequence, read N- to C-terminus: Octanoyltransferase (215 aa).

Residues 42-215 form the BPL/LPL catalytic domain; sequence QNTPDEIWLL…AEKLKARLKQ (174 aa). Substrate contacts are provided by residues 81–88, 148–150, and 161–163; these read RGGQITYH, ALG, and GLA. The Acyl-thioester intermediate role is filled by C179.

It belongs to the LipB family.

It localises to the cytoplasm. The enzyme catalyses octanoyl-[ACP] + L-lysyl-[protein] = N(6)-octanoyl-L-lysyl-[protein] + holo-[ACP] + H(+). The protein operates within protein modification; protein lipoylation via endogenous pathway; protein N(6)-(lipoyl)lysine from octanoyl-[acyl-carrier-protein]: step 1/2. Catalyzes the transfer of endogenously produced octanoic acid from octanoyl-acyl-carrier-protein onto the lipoyl domains of lipoate-dependent enzymes. Lipoyl-ACP can also act as a substrate although octanoyl-ACP is likely to be the physiological substrate. The polypeptide is Octanoyltransferase (Nitrosospira multiformis (strain ATCC 25196 / NCIMB 11849 / C 71)).